A 112-amino-acid polypeptide reads, in one-letter code: uncharacterized protein (112 aa).

The transit peptide at 1–21 (MYLSAQLMRTVTASHLTLRAL) directs the protein to the mitochondrion.

It is found in the mitochondrion. This is an uncharacterized protein from Saccharomyces cerevisiae (strain ATCC 204508 / S288c) (Baker's yeast).